A 328-amino-acid chain; its full sequence is N-acyl-aromatic-L-amino acid amidohydrolase (carboxylate-forming) A (328 aa).

Positions 30 and 33 each coordinate Zn(2+). Residues Arg-74 and 81-82 (NR) contribute to the substrate site. Zn(2+) is bound at residue His-127. Substrate contacts are provided by Glu-189 and Tyr-300.

This sequence belongs to the AspA/AstE family. Aspartoacylase subfamily. Homotetramer. Zn(2+) serves as cofactor.

The protein localises to the apical cell membrane. Its subcellular location is the cytoplasm. The enzyme catalyses an N-acyl-aromatic L-alpha-amino acid + H2O = an aromatic L-alpha-amino acid + a carboxylate. It carries out the reaction an N-acetyl-L-cysteine-S-conjugate + H2O = an S-substituted L-cysteine + acetate. In terms of biological role, plays an important role in deacetylating mercapturic acids in kidney proximal tubules. This Danio rerio (Zebrafish) protein is N-acyl-aromatic-L-amino acid amidohydrolase (carboxylate-forming) A (acy3.1).